A 404-amino-acid chain; its full sequence is Ubiquitin-like modifier-activating enzyme 5 (404 aa).

Gly-83, Asp-104, Lys-127, Asn-150, and Asn-184 together coordinate ATP. The Zn(2+) site is built by Cys-226 and Cys-229. Cys-250 serves as the catalytic Glycyl thioester intermediate. Zn(2+) contacts are provided by Cys-303 and Cys-308. Residues 372–393 (APEKSSETSEETVTAATADETS) are disordered. Residues 382–391 (ETVTAATADE) are compositionally biased toward low complexity.

The protein belongs to the ubiquitin-activating E1 family. UBA5 subfamily.

Functionally, E1-like enzyme which activates UFM1. This chain is Ubiquitin-like modifier-activating enzyme 5, found in Drosophila simulans (Fruit fly).